A 1374-amino-acid polypeptide reads, in one-letter code: Protein Dicer (1374 aa).

One can recognise a Helicase ATP-binding domain in the interval 19-206; that stretch reads VYNIASKQNT…YHRLYQWEQL (188 aa). Residue 32-39 coordinates ATP; it reads MRTGAGKT. The DECH box motif lies at 145-148; the sequence is DECH. One can recognise a Helicase C-terminal domain in the interval 340–517; that stretch reads DVTDKVFKLL…SLVCEERERV (178 aa). The 92-residue stretch at 537 to 628 folds into the Dicer dsRNA-binding fold domain; it reads AVSLLYNFCN…KPLDFRRKIA (92 aa). RNase III domains follow at residues 916-1038 and 1083-1233; these read QALT…LDSG and SSYI…LDSG. Mg(2+)-binding residues include glutamate 1123, aspartate 1219, and glutamate 1222. Residues 1263–1355 form a C-terminal dsRNA-binding fold region; that stretch reads EHKVYQLLKD…LLYSCNCKFS (93 aa). 4 residues coordinate Zn(2+): cysteine 1275, histidine 1312, cysteine 1350, and cysteine 1352.

This sequence belongs to the helicase family. Dicer subfamily. It depends on Mg(2+) as a cofactor. Mn(2+) serves as cofactor.

The protein localises to the cytoplasm. The protein resides in the nucleus. Functionally, required for G1 arrest and mating in response to nitrogen starvation. Ago1 regulation of cytokinesis and cell cycle checkpoints occurs downstream of dcr1. Required, indirectly, for regulated hyperphosphorylation of cdc2. Has a role in the RNA interference (RNAi) pathway which is important for heterochromatin formation, accurate chromosome segregation, centromere cohesion and telomere function during mitosis and meiosis. Digests double-stranded RNA (dsRNA) producing 21 to 23 bp dsRNAs, so-called interfering RNAs (siRNA). Required for both post-transcriptional and transcriptional gene silencing. Required for silencing at the centromeres and for initiation of transcriptionally silent heterochromatin at the mating type locus. Promotes histone H3 'Lys-10' methylation necessary for centromere function. Required for recruitment of swi6 and cohesin to an ectopic dg repeat. This is Protein Dicer (dcr1) from Schizosaccharomyces pombe (strain 972 / ATCC 24843) (Fission yeast).